We begin with the raw amino-acid sequence, 338 residues long: Peroxidase 15 (338 aa).

The signal sequence occupies residues 1 to 22; it reads MARIGSFLIILYLIYALTLCIC. Disulfide bonds link Cys45–Cys125, Cys78–Cys83, Cys131–Cys332, and Cys210–Cys242. Catalysis depends on His76, which acts as the Proton acceptor. Asp77, Val80, Gly82, Asp84, and Ser86 together coordinate Ca(2+). Pro173 contributes to the substrate binding site. Asn176 carries an N-linked (GlcNAc...) asparagine glycan. His203 contributes to the heme b binding site. A Ca(2+)-binding site is contributed by Thr204. 2 N-linked (GlcNAc...) asparagine glycosylation sites follow: Asn219 and Asn250. Ca(2+)-binding residues include Asp255, Ser258, and Asp263.

It belongs to the peroxidase family. Classical plant (class III) peroxidase subfamily. Heme b serves as cofactor. Ca(2+) is required as a cofactor.

Its subcellular location is the secreted. The catalysed reaction is 2 a phenolic donor + H2O2 = 2 a phenolic radical donor + 2 H2O. Removal of H(2)O(2), oxidation of toxic reductants, biosynthesis and degradation of lignin, suberization, auxin catabolism, response to environmental stresses such as wounding, pathogen attack and oxidative stress. These functions might be dependent on each isozyme/isoform in each plant tissue. This Arabidopsis thaliana (Mouse-ear cress) protein is Peroxidase 15 (PER15).